Consider the following 127-residue polypeptide: Glycine cleavage system H protein (127 aa).

The 82-residue stretch at 24–105 folds into the Lipoyl-binding domain; sequence TALVGITDFA…YNDGWLVKMK (82 aa). At Lys-65 the chain carries N6-lipoyllysine.

It belongs to the GcvH family. The glycine cleavage system is composed of four proteins: P, T, L and H. (R)-lipoate is required as a cofactor.

Functionally, the glycine cleavage system catalyzes the degradation of glycine. The H protein shuttles the methylamine group of glycine from the P protein to the T protein. The sequence is that of Glycine cleavage system H protein from Pelodictyon phaeoclathratiforme (strain DSM 5477 / BU-1).